Consider the following 482-residue polypeptide: MKFTLQSTAPQSAQHEYLLVLVTEQQLKNTADTYKINTLDTITHTSQFKSGFNEVLTLIGQAETCSYLNLVGLGDLKDLQPAKIAKLAQTIIKLVQTKFKQIHLDISALPIELHYLFALNLTQANYVFDEFKSKKSEAQLEQIHLITAQTGLTTQQLDLIQAIASGQDLARDLGNRPGNICFPEYLADQAKALAHEFPELLKVTILDEQQMADLGMNAFLAVSQGSDRPGRIITLEYNAQLEQAPVVLVGKGVTFDTGGISIKPAQGMDEMKFDMCGAASVLGTIRTLCEARLPIHVVGAVAAAENMPSGQATRPGDIVTTMSGQTVEILNTDAEGRLVLCDTLTYIKRFNPSLVIDIATLTGACVVALGKVVSGLFSPDDALAQELQQAGEQSFDRVWRLPVMDDYQELLDSPFADIANIGGPYGGAITAACFLQRFTRDYRWAHLDIAGTAWLSGTAKGATGRPVPLLVQFLANRVGTND.

Mn(2+) contacts are provided by lysine 251 and aspartate 256. The active site involves lysine 263. Residues aspartate 274, aspartate 333, and glutamate 335 each coordinate Mn(2+). Arginine 337 is a catalytic residue.

It belongs to the peptidase M17 family. The cofactor is Mn(2+).

It localises to the cytoplasm. It catalyses the reaction Release of an N-terminal amino acid, Xaa-|-Yaa-, in which Xaa is preferably Leu, but may be other amino acids including Pro although not Arg or Lys, and Yaa may be Pro. Amino acid amides and methyl esters are also readily hydrolyzed, but rates on arylamides are exceedingly low.. The enzyme catalyses Release of an N-terminal amino acid, preferentially leucine, but not glutamic or aspartic acids.. Presumably involved in the processing and regular turnover of intracellular proteins. Catalyzes the removal of unsubstituted N-terminal amino acids from various peptides. The chain is Probable cytosol aminopeptidase from Acinetobacter baylyi (strain ATCC 33305 / BD413 / ADP1).